A 68-amino-acid polypeptide reads, in one-letter code: Sperm-associated antigen 11A (68 aa).

A signal peptide spans 1-19 (MKVLLLFAVFFCLVQRNSG). 3 disulfides stabilise this stretch: C30/C59, C37/C52, and C42/C60.

This sequence belongs to the beta-defensin family. Only expressed in epididymis (middle part of the caput).

The protein localises to the secreted. Has antimicrobial activity against E.coli. Plays a role in the defense response in the male reproductive tract, contributing to sperm maturation, storage and protection. This Rattus norvegicus (Rat) protein is Sperm-associated antigen 11A.